We begin with the raw amino-acid sequence, 563 residues long: Alpha-keto-acid decarboxylase (563 aa).

Glu-59 is a thiamine diphosphate binding site. Positions 348-367 (SPPVASPPAEPLPPPPPREQ) are disordered. The span at 351-366 (VASPPAEPLPPPPPRE) shows a compositional bias: pro residues. The segment at 394–476 (TSFYGMADHR…VVVNNDGYTV (83 aa)) is thiamine pyrophosphate binding. Positions 444, 471, and 473 each coordinate Mg(2+).

The protein belongs to the TPP enzyme family. A metal cation is required as a cofactor. It depends on thiamine diphosphate as a cofactor.

In terms of biological role, decarboxylates branched-chain and aromatic alpha-keto acids to aldehydes. The polypeptide is Alpha-keto-acid decarboxylase (kdc) (Mycobacterium avium (strain 104)).